A 201-amino-acid polypeptide reads, in one-letter code: Recombination protein RecR (201 aa).

The C4-type zinc-finger motif lies at 60–75 (CSECGNMDVSDPCTVC). The 96-residue stretch at 83–178 (AAICVVETVG…SITSLARGVP (96 aa)) folds into the Toprim domain.

It belongs to the RecR family.

May play a role in DNA repair. It seems to be involved in an RecBC-independent recombinational process of DNA repair. It may act with RecF and RecO. The protein is Recombination protein RecR of Maricaulis maris (strain MCS10) (Caulobacter maris).